A 430-amino-acid polypeptide reads, in one-letter code: Glutamate-1-semialdehyde 2,1-aminomutase (430 aa).

Residue Lys-267 is modified to N6-(pyridoxal phosphate)lysine.

The protein belongs to the class-III pyridoxal-phosphate-dependent aminotransferase family. HemL subfamily. Homodimer. The cofactor is pyridoxal 5'-phosphate.

It is found in the cytoplasm. It catalyses the reaction (S)-4-amino-5-oxopentanoate = 5-aminolevulinate. Its pathway is porphyrin-containing compound metabolism; protoporphyrin-IX biosynthesis; 5-aminolevulinate from L-glutamyl-tRNA(Glu): step 2/2. The sequence is that of Glutamate-1-semialdehyde 2,1-aminomutase from Anaeromyxobacter dehalogenans (strain 2CP-C).